The sequence spans 288 residues: Cyclin-dependent kinase 2 homolog (288 aa).

A Protein kinase domain is found at Tyr-4–Phe-284. Residues Ile-10–Val-18 and Lys-32 each bind ATP. Thr-14 is subject to Phosphothreonine. A Phosphotyrosine modification is found at Tyr-15. Asp-125 acts as the Proton acceptor in catalysis. Position 158 is a phosphothreonine (Thr-158).

This sequence belongs to the protein kinase superfamily. CMGC Ser/Thr protein kinase family. CDC2/CDKX subfamily. May form a complex composed of at least the catalytic subunit CRK2 and a cyclin. Mg(2+) is required as a cofactor.

The protein localises to the cytoplasm. It carries out the reaction L-seryl-[protein] + ATP = O-phospho-L-seryl-[protein] + ADP + H(+). It catalyses the reaction L-threonyl-[protein] + ATP = O-phospho-L-threonyl-[protein] + ADP + H(+). The enzyme catalyses [DNA-directed RNA polymerase] + ATP = phospho-[DNA-directed RNA polymerase] + ADP + H(+). With respect to regulation, phosphorylation at Thr-14 or Tyr-15 inactivates the enzyme, while phosphorylation at Thr-158 activates it. Serine/threonine-protein kinase. Involved in the control of the cell cycle. Required for entry into S-phase and mitosis. Probable component of the kinase complex that phosphorylates the repetitive C-terminus of RNA polymerase II. The sequence is that of Cyclin-dependent kinase 2 homolog from Plasmodium chabaudi chabaudi.